A 292-amino-acid chain; its full sequence is GTP cyclohydrolase FolE2 (292 aa).

This sequence belongs to the GTP cyclohydrolase IV family.

It carries out the reaction GTP + H2O = 7,8-dihydroneopterin 3'-triphosphate + formate + H(+). It functions in the pathway cofactor biosynthesis; 7,8-dihydroneopterin triphosphate biosynthesis; 7,8-dihydroneopterin triphosphate from GTP: step 1/1. Converts GTP to 7,8-dihydroneopterin triphosphate. This chain is GTP cyclohydrolase FolE2, found in Staphylococcus carnosus (strain TM300).